Here is a 106-residue protein sequence, read N- to C-terminus: Large ribosomal subunit protein uL24 (106 aa).

Residues 84–97 (EKIGRELGAKEKAR) show a composition bias toward basic and acidic residues. The tract at residues 84-106 (EKIGRELGAKEKARLQKRKAAAK) is disordered.

The protein belongs to the universal ribosomal protein uL24 family. Part of the 50S ribosomal subunit.

In terms of biological role, one of two assembly initiator proteins, it binds directly to the 5'-end of the 23S rRNA, where it nucleates assembly of the 50S subunit. Its function is as follows. One of the proteins that surrounds the polypeptide exit tunnel on the outside of the subunit. This Anaeromyxobacter dehalogenans (strain 2CP-C) protein is Large ribosomal subunit protein uL24.